A 284-amino-acid chain; its full sequence is Digeranylgeranylglyceryl phosphate synthase (284 aa).

7 consecutive transmembrane segments (helical) span residues 10–30 (IHNV…SSMW), 37–57 (LILA…INDV), 76–98 (AVSL…ILSA), 102–119 (YLQF…IFYA), 126–146 (GIYG…YGGL), 217–237 (LPLF…FLYI), and 260–280 (GSAF…QFLF).

This sequence belongs to the UbiA prenyltransferase family. DGGGP synthase subfamily. Requires Mg(2+) as cofactor.

It localises to the cell membrane. It catalyses the reaction sn-3-O-(geranylgeranyl)glycerol 1-phosphate + (2E,6E,10E)-geranylgeranyl diphosphate = 2,3-bis-O-(geranylgeranyl)-sn-glycerol 1-phosphate + diphosphate. The protein operates within membrane lipid metabolism; glycerophospholipid metabolism. In terms of biological role, prenyltransferase that catalyzes the transfer of the geranylgeranyl moiety of geranylgeranyl diphosphate (GGPP) to the C2 hydroxyl of (S)-3-O-geranylgeranylglyceryl phosphate (GGGP). This reaction is the second ether-bond-formation step in the biosynthesis of archaeal membrane lipids. The sequence is that of Digeranylgeranylglyceryl phosphate synthase from Metallosphaera sedula (strain ATCC 51363 / DSM 5348 / JCM 9185 / NBRC 15509 / TH2).